The chain runs to 193 residues: Ribonuclease HII (193 aa).

The RNase H type-2 domain maps to 15 to 193; the sequence is CIVAGIDEAG…PYHRRSFRCC (179 aa). 3 residues coordinate a divalent metal cation: aspartate 21, glutamate 22, and aspartate 112.

Belongs to the RNase HII family. It depends on Mn(2+) as a cofactor. Mg(2+) serves as cofactor.

It localises to the cytoplasm. It carries out the reaction Endonucleolytic cleavage to 5'-phosphomonoester.. Endonuclease that specifically degrades the RNA of RNA-DNA hybrids. The polypeptide is Ribonuclease HII (Rickettsia conorii (strain ATCC VR-613 / Malish 7)).